The sequence spans 149 residues: Endonuclease I (149 aa).

In terms of assembly, homodimer.

It catalyses the reaction Endonucleolytic cleavage to 5'-phosphooligonucleotide end-products.. Its function is as follows. Junction-resolving enzyme that selectively binds and cleaves four-way (Holliday) DNA junctions present after viral genomic replication. These intermediates are created during DNA repair, processing of stalled replication forks and homologous genetic recombination. Introduces two nicks on the two non-crossing strands, at 5' sides of the junction. Also participates together with gp6 in the degradation of host chromosome to provide nucleotides for phage DNA synthesis. This Escherichia coli (Bacteriophage T7) protein is Endonuclease I.